A 134-amino-acid polypeptide reads, in one-letter code: Small ribosomal subunit protein bS6 (134 aa).

Residues 103–134 form a disordered region; it reads AAPVKSAEEGTEEVAAEAATEAPAETTTTVEG. Over residues 118 to 134 the composition is skewed to low complexity; it reads AEAATEAPAETTTTVEG.

It belongs to the bacterial ribosomal protein bS6 family.

Functionally, binds together with bS18 to 16S ribosomal RNA. The sequence is that of Small ribosomal subunit protein bS6 from Citrifermentans bemidjiense (strain ATCC BAA-1014 / DSM 16622 / JCM 12645 / Bem) (Geobacter bemidjiensis).